Here is a 128-residue protein sequence, read N- to C-terminus: Large ribosomal subunit protein bL21 (128 aa).

The segment at glycine 104 to histidine 128 is disordered. The span at glutamate 116–histidine 128 shows a compositional bias: basic and acidic residues.

It belongs to the bacterial ribosomal protein bL21 family. In terms of assembly, part of the 50S ribosomal subunit. Contacts protein L20.

Its function is as follows. This protein binds to 23S rRNA in the presence of protein L20. This chain is Large ribosomal subunit protein bL21, found in Nitrobacter hamburgensis (strain DSM 10229 / NCIMB 13809 / X14).